We begin with the raw amino-acid sequence, 355 residues long: Mu-like prophage FluMu protein gp47 (355 aa).

The protein belongs to the Mu gp47/PBSX XkdT family.

This is Mu-like prophage FluMu protein gp47 from Haemophilus influenzae (strain ATCC 51907 / DSM 11121 / KW20 / Rd).